A 114-amino-acid chain; its full sequence is RutC family protein YoaB (114 aa).

The protein belongs to the RutC family.

This is RutC family protein YoaB (yoaB) from Escherichia coli O6:H1 (strain CFT073 / ATCC 700928 / UPEC).